The primary structure comprises 484 residues: MVSPVVLATTAMIVVFLLAQRYLSLPVLPNEPLLIPHWMPFFGHAFRFARSKRSFFRWANAKTGGQPFSVPMGGRRHYIFSDPADIAGIHKNGKTLSIRGFVRFIYISIWGFKPADADAMWEIKPEWHRMDIEWLLSDKNDQIAVQYLRRIEEQLRALDAEVEGAPDKAIVRPGLKTVVDVQGKATCQVLYGATTLEKHPGLLDDLTIMVRDGFWGLLFRAPRFLFRNAYEARDRIINTYADLVENIETRKDVSQYLYERTVYLTQQGISPQAQGADMLRTMFASLLNSMPTGYLALLHILAEPGLADEVRKELIDCGYLERSPEEMLEILPGKMPLLRSIWHETLRMHNNSLTVREVTADTKFMGKTKWQVQKGGVINIPCGLMHFNEALHPDPESFHARRFMDKELGGEGESHARTTKPFGGGSTHCPGRVFAEKQMIGLVAALLMRYDMGIVNADWKMPLVSEFDDITKQPTVWIRISKRV.

Residues 2-24 traverse the membrane as a helical segment; it reads VSPVVLATTAMIVVFLLAQRYLS. Cysteine 429 contacts heme.

Belongs to the cytochrome P450 family. The cofactor is heme.

Its subcellular location is the membrane. It functions in the pathway secondary metabolite biosynthesis. Functionally, cytochrome P450 monooxygenase; part of the gene cluster that mediates the biosynthesis of oxaleimides, cytotoxic compounds containing an unusual disubstituted succinimide moiety. The first step of the pathway is provided by the HR-PKS poxF that serves in a new mode of collaborative biosynthesis with the PKS-NRPS poxE, by providing the olefin containing amino acid substrate via the synthesis of an ACP-bound dec-4-enoate. The cytochrome P450 monooxygenase poxM-catalyzed oxidation at the alpha-position creates the enzyme-bound 2-hydroxydec-4-enoyl-ACP thioester, which may be prone to spontaneous hydrolysis to yield 2-hydroxydec-4-enoic acid due to increased electrophilicity of the carbonyl. 2-hydroxydec-4-enoic acid can then be further oxidized by poxM to yield the alpha-ketoacid 2-oxodec-4-enoicacid, which is reductively aminated by the aminotransferase poxL to yield (S,E)-2-aminodec-4-enoic acid. The Hybrid PKS-NRPS synthetase poxE then performs condensation between the octaketide product of its PKS modules and the amino group of (S,E)-2-aminodec-4-enoic acid which is activated and incorporated by the adenylation domain. The resulting aminoacyl product can be cyclized by the Diels-Alderase PoxQ and reductively released by the reductive (R) domain of poxE to yield an aldehyde intermediate. The released aldehyde is then substrate for a Knoevenagel condensation by the hydrolyase poxO followed by an oxidation at the 5-position of the pyrrolidone ring. The presence of the olefin from the amino acid building block allows for migration of the substituted allyl group to occur. This allylic transposition reaction takes place in a conjugate addition, semipinacol-like fashion to yield a succinimide intermediate. Iterative two-electron oxidations of the C7 methyl of the succinimide intermediate to the carboxylic acid can be catalyzed by one of two remaining cytochrome P450 monooxygenasess poxC or poxD to yield oxaleimide A. Subsequent oxidation yields the maleimide scaffold oxaleimide I. Both oxaleimide A and oxaleimide I can undergo oxidative modifications in the decalin ring to yield the series of products oxaleimides B to H. The protein is Cytochrome P450 monooxygenase poxD of Penicillium oxalicum.